Reading from the N-terminus, the 696-residue chain is uncharacterized protein (696 aa).

10 helical membrane-spanning segments follow: residues 38–58 (IISI…NALA), 107–127 (LIYV…GYVV), 215–235 (AMAS…IFAL), 245–265 (SLFT…VVAL), 292–312 (TLPF…LIYL), 329–349 (VFFV…ILGE), 380–400 (FWVT…LTSA), 402–422 (FGAA…ACIG), 433–453 (FPSL…FLSS), and 457–477 (LVVA…IALP). CBS domains lie at 527-587 (RSPE…PMSS) and 617-674 (IHPT…THTG).

It belongs to the chloride channel (TC 2.A.49) family.

It is found in the membrane. Functionally, voltage-gated chloride channel. This is an uncharacterized protein from Schizosaccharomyces pombe (strain 972 / ATCC 24843) (Fission yeast).